Consider the following 473-residue polypeptide: Cannabinoid receptor 1 (473 aa).

The Extracellular portion of the chain corresponds to 1-117 (MKSILDGLAD…CFMILNPSQQ (117 aa)). The segment at 2-23 (KSILDGLADTTFRTITTDLLYV) is required for mitochondrial localization. Residues N78 and N84 are each glycosylated (N-linked (GlcNAc...) asparagine). Residues 118 to 143 (LAIAVLSLTLGTFTVLENLLVLCVIL) form a helical membrane-spanning segment. The Cytoplasmic portion of the chain corresponds to 144–155 (HSRSLRCRPSYH). Residues 156–176 (FIGSLAVADLLGSVIFVYSFV) form a helical membrane-spanning segment. The Extracellular segment spans residues 177–188 (DFHVFHRKDSPN). A helical transmembrane segment spans residues 189–213 (VFLFKLGGVTASFTASVGSLFLTAI). Residues 214–233 (DRYISIHRPLAYKRIVTRPK) are Cytoplasmic-facing. A helical transmembrane segment spans residues 234 to 256 (AVVAFCLMWTIAIVIAVLPLLGW). Topologically, residues 257-274 (NCKKLQSVCSDIFPLIDE) are extracellular. Residues 275-300 (TYLMFWIGVTSVLLLFIVYAYMYILW) form a helical membrane-spanning segment. Topologically, residues 301–345 (KAHSHAVRMIQRGTQKSIIIHTSEDGKVQVTRPDQARMDIRLAKT) are cytoplasmic. Residues 346-366 (LVLILVVLIICWGPLLAIMVY) traverse the membrane as a helical segment. The Extracellular portion of the chain corresponds to 367 to 378 (DVFGKMNKLIKT). A helical transmembrane segment spans residues 379-400 (VFAFCSMLCLLNSTVNPIIYAL). The Cytoplasmic segment spans residues 401-473 (RSKDLRHAFR…VSTDTSAEAL (73 aa)). A lipid anchor (S-palmitoyl cysteine) is attached at C416. Phosphoserine occurs at positions 426 and 430.

It belongs to the G-protein coupled receptor 1 family. Interacts (via C-terminus) with CNRIP1. Associates with G protein alpha subunits, including G(i) alpha-1/GNAI1, G(i) alpha-3/GNAI3 and G(o)-alpha/GNAO1; palmitoylation is important for interaction with GNAI3 and GNAO1. Post-translationally, palmitoylation at Cys-416 is important for recruitment at both plasma membrane and lipid rafts and association with G protein alpha subunits. In terms of tissue distribution, expressed in the brain, in the striatum, medial septum, descending arm of the band of Broca, the amygdaloid nucleus, the hippocampus and cortex (at protein level). High levels in the lateral striatum. In rostral brain regions, high expression levels in the dorsal lateral striatum, while in the caudal brain regions, high levels are observed in the ventral lateral striatum. Expressed in monocytes/macrophages (at protein level). Expressed in striated muscles and in vascular smooth muscles cells (at protein level).

The protein localises to the cell membrane. It localises to the mitochondrion outer membrane. Its subcellular location is the cell projection. The protein resides in the axon. It is found in the presynapse. Hemopressin, a peptide derived from hemoglobin subunit alpha (HBA1 and/or HBA2), acts as an antagonist peptide: hemopressin-binding efficiently blocks cannabinoid receptor CNR1 and subsequent signaling. Functionally, G-protein coupled receptor for cannabinoids, including endocannabinoids (eCBs), such as N-arachidonoylethanolamide (also called anandamide or AEA) and 2-arachidonoylglycerol (2-AG). Mediates many cannabinoid-induced effects, acting, among others, on food intake, memory loss, gastrointestinal motility, catalepsy, ambulatory activity, anxiety, chronic pain. Signaling typically involves reduction in cyclic AMP. In the hypothalamus, may have a dual effect on mitochondrial respiration depending upon the agonist dose and possibly upon the cell type. Increases respiration at low doses, while decreases respiration at high doses. At high doses, CNR1 signal transduction involves G-protein alpha-i protein activation and subsequent inhibition of mitochondrial soluble adenylate cyclase, decrease in cyclic AMP concentration, inhibition of protein kinase A (PKA)-dependent phosphorylation of specific subunits of the mitochondrial electron transport system, including NDUFS2. In the hypothalamus, inhibits leptin-induced reactive oxygen species (ROS) formation and mediates cannabinoid-induced increase in SREBF1 and FASN gene expression. In response to cannabinoids, drives the release of orexigenic beta-endorphin, but not that of melanocyte-stimulating hormone alpha/alpha-MSH, from hypothalamic POMC neurons, hence promoting food intake. In the hippocampus, regulates cellular respiration and energy production in response to cannabinoids. Involved in cannabinoid-dependent depolarization-induced suppression of inhibition (DSI), a process in which depolarization of CA1 postsynaptic pyramidal neurons mobilizes eCBs, which retrogradely activate presynaptic CB1 receptors, transiently decreasing GABAergic inhibitory neurotransmission. Also reduces excitatory synaptic transmission. In superior cervical ganglions and cerebral vascular smooth muscle cells, inhibits voltage-gated Ca(2+) channels in a constitutive, as well as agonist-dependent manner. Induces leptin production in adipocytes and reduces LRP2-mediated leptin clearance in the kidney, hence participating in hyperleptinemia. In adipose tissue, CNR1 signaling leads to increased expression of SREBF1, ACACA and FASN genes. In the liver, activation by endocannabinoids leads to increased de novo lipogenesis and reduced fatty acid catabolism, associated with increased expression of SREBF1/SREBP-1, GCK, ACACA, ACACB and FASN genes. May also affect de novo cholesterol synthesis and HDL-cholesteryl ether uptake. Peripherally modulates energy metabolism. In high carbohydrate diet-induced obesity, may decrease the expression of mitochondrial dihydrolipoyl dehydrogenase/DLD in striated muscles, as well as that of selected glucose/ pyruvate metabolic enzymes, hence affecting energy expenditure through mitochondrial metabolism. In response to cannabinoid anandamide, elicits a pro-inflammatory response in macrophages, which involves NLRP3 inflammasome activation and IL1B and IL18 secretion. In macrophages infiltrating pancreatic islets, this process may participate in the progression of type-2 diabetes and associated loss of pancreatic beta-cells. The protein is Cannabinoid receptor 1 (Cnr1) of Rattus norvegicus (Rat).